A 594-amino-acid polypeptide reads, in one-letter code: Beta-fructofuranosidase, insoluble isoenzyme CWINV3 (594 aa).

The signal sequence occupies residues 1–28; it reads MAKLNRSNIGLSLLLSMFLANFITDLEA. Substrate contacts are provided by residues 50-53, Gln-69, Trp-77, and 113-114; these read WMND and WS. The active site involves Asp-53. N-linked (GlcNAc...) asparagine glycosylation is present at Asn-147. 179 to 180 serves as a coordination point for substrate; sequence RD. Asn-217 carries N-linked (GlcNAc...) asparagine glycosylation. Position 235 (Glu-235) interacts with substrate. Asn-297 and Asn-329 each carry an N-linked (GlcNAc...) asparagine glycan. Cys-428 and Cys-480 are joined by a disulfide.

Belongs to the glycosyl hydrolase 32 family. Expressed in seedlings, leaves, flowers, and seeds.

It is found in the secreted. Its subcellular location is the extracellular space. The protein localises to the apoplast. It localises to the cell wall. The enzyme catalyses Hydrolysis of terminal, non-reducing (2-&gt;1)- and (2-&gt;6)-linked beta-D-fructofuranose residues in fructans.. Functionally, 6-fructan exohydrolase that can use phlein, levan, neokestose, levanbiose, 6-kestose, and 1-kestose as substrates. The polypeptide is Beta-fructofuranosidase, insoluble isoenzyme CWINV3 (CWINV3) (Arabidopsis thaliana (Mouse-ear cress)).